The primary structure comprises 298 residues: ADP-ribosylation factor GTPase-activating protein effector protein 2 (298 aa).

Residue Ser2 is modified to N-acetylserine. The 123-residue stretch at 8-130 folds into the Arf-GAP domain; sequence KKALSALLRD…KWIGDLSSIE (123 aa). The segment at 23–47 adopts a C4-type zinc-finger fold; the sequence is CADCKAQLHPRWASWSLGVFICIKC. The tract at residues 137–180 is disordered; it reads EPVLHKPSANHSLPASNARLDQSSNSLQKTQTQPPSHLLSTSRS. The segment covering 145 to 171 has biased composition (polar residues); sequence ANHSLPASNARLDQSSNSLQKTQTQPP. A phosphoserine mark is found at Ser180, Ser183, and Ser207.

It localises to the cytoplasm. The protein resides in the golgi apparatus. Functionally, GTPase-activating protein for the ADP ribosylation factor family. The chain is ADP-ribosylation factor GTPase-activating protein effector protein 2 (AGE2) from Saccharomyces cerevisiae (strain ATCC 204508 / S288c) (Baker's yeast).